The sequence spans 718 residues: MSVPAIAVYTSPPGAVYTSSSSSELEASSRGSAPCATAAPPSPASSHRHQAIAGGLSCLFSSPTAAPRAAAAQDELGALWHDRSGEATAVGGGGGGGGYSYPQPSSPFKWRDMLHHSPVPLFHSPASSPASRSPSASWLAGRERERLFSSFVRNALGSCVDYAPVAALPLGVSAAVGVGAGELAFELDEHLSEAEPSCEPYARDLLAGAQARHRIFHDELVVKAFFEAERAHRGQTRASGDPYLQHCVETAVLLAKIGANATVVSAGLLHDTIDDSFMDYDQIFRMFGAGVADLVEGVSKLSHLSKLARDNNTASRTVEADRLHTMFLAMADARAVLIKLADRLHNMKTIEALPLVKQQRFAKETMEIFVPLANRLGIASWKDQLENICFKHLNPEEHKELSSKLVISFDEALLTSTLDKLDKGLRDEGISYHSLSGRHKSLYSIYSKMIKKNLTMDDVHDIHGLRLVVDTEQDCYQALDIVHKLWPRVAGRFKDYILHPKLNGYRSLHTVIMCEGIHPFEVQIRTKEMHLQAEYGFAAHWRYKEGGCKHSFVLQMVEWARWVLTWQCEAMSKERSSGLGRSDAIRPPCPFPSHSEDCPYSYTRQCNHDGPIFVIMLEHDKMSVQELPANSTVVDLMERVGANSPRCSPYSFPLKEELRPRVNHKPISDPNRKLCMGDVVELTPALPHKSLTEYREEIQRMYERGGFALATTRDGPAS.

The transit peptide at 1–68 (MSVPAIAVYT…LFSSPTAAPR (68 aa)) directs the protein to the chloroplast. Residues 9 to 48 (YTSPPGAVYTSSSSSELEASSRGSAPCATAAPPSPASSHR) form a disordered region. Over residues 19-39 (SSSSSELEASSRGSAPCATAA) the composition is skewed to low complexity. Residues 243-347 (YLQHCVETAV…IKLADRLHNM (105 aa)) form the HD domain.

It belongs to the RelA/SpoT family.

The protein resides in the plastid. It is found in the chloroplast. It carries out the reaction GTP + ATP = guanosine 3'-diphosphate 5'-triphosphate + AMP. In terms of biological role, probable ppGpp (guanosine 3'-diphosphate 5'-diphosphate) synthetase that may be involved in a rapid plant ppGpp-mediated response to pathogens and other stresses. This is Probable GTP diphosphokinase RSH2, chloroplastic (RSH2) from Oryza sativa subsp. japonica (Rice).